Here is a 158-residue protein sequence, read N- to C-terminus: SsrA-binding protein (158 aa).

The disordered stretch occupies residues 133 to 158 (KIHDKRETEAKRDWNRQKQRLLKDNA). Over residues 136–158 (DKRETEAKRDWNRQKQRLLKDNA) the composition is skewed to basic and acidic residues.

This sequence belongs to the SmpB family.

The protein resides in the cytoplasm. Its function is as follows. Required for rescue of stalled ribosomes mediated by trans-translation. Binds to transfer-messenger RNA (tmRNA), required for stable association of tmRNA with ribosomes. tmRNA and SmpB together mimic tRNA shape, replacing the anticodon stem-loop with SmpB. tmRNA is encoded by the ssrA gene; the 2 termini fold to resemble tRNA(Ala) and it encodes a 'tag peptide', a short internal open reading frame. During trans-translation Ala-aminoacylated tmRNA acts like a tRNA, entering the A-site of stalled ribosomes, displacing the stalled mRNA. The ribosome then switches to translate the ORF on the tmRNA; the nascent peptide is terminated with the 'tag peptide' encoded by the tmRNA and targeted for degradation. The ribosome is freed to recommence translation, which seems to be the essential function of trans-translation. The protein is SsrA-binding protein of Ruegeria pomeroyi (strain ATCC 700808 / DSM 15171 / DSS-3) (Silicibacter pomeroyi).